Here is a 1058-residue protein sequence, read N- to C-terminus: Ubiquitin-like modifier-activating enzyme 1 (1058 aa).

The interval 1–47 is disordered; it reads MSSSPLSKKRRVSGPDPKPGSNCSPAQSVLPQVPSAPTNGMAKNGSE. Ser2 is subject to N-acetylserine. A phosphoserine mark is found at Ser4, Ser13, Ser21, Ser24, and Ser46. Over residues 21–38 the composition is skewed to polar residues; the sequence is SNCSPAQSVLPQVPSAPT. Tyr55 bears the Phosphotyrosine mark. 2 consecutive repeat copies span residues 63 to 199 and 459 to 611. Residues 63–611 form a 2 approximate repeats region; the sequence is GHEAMKRLQT…GTKGNVQVVI (549 aa). Residues Ala478, Asp504, Arg515, Lys528, and 576–577 contribute to the ATP site; that span reads DN. Lys528 carries the post-translational modification N6-succinyllysine. The Glycyl thioester intermediate role is filled by Cys632. Lys671 carries the N6-acetyllysine modification. Residue Thr800 is modified to Phosphothreonine. A phosphoserine mark is found at Ser810, Ser816, Ser820, and Ser835. Position 980 is an N6-acetyllysine (Lys980).

It belongs to the ubiquitin-activating E1 family. As to quaternary structure, monomer. In terms of tissue distribution, ubiquitous.

Its subcellular location is the cytoplasm. It localises to the mitochondrion. The protein localises to the nucleus. The enzyme catalyses ATP + ubiquitin + [E1 ubiquitin-activating enzyme]-L-cysteine = AMP + diphosphate + S-ubiquitinyl-[E1 ubiquitin-activating enzyme]-L-cysteine.. Its pathway is protein modification; protein ubiquitination. Its function is as follows. Catalyzes the first step in ubiquitin conjugation to mark cellular proteins for degradation through the ubiquitin-proteasome system. Activates ubiquitin by first adenylating its C-terminal glycine residue with ATP, and thereafter linking this residue to the side chain of a cysteine residue in E1, yielding a ubiquitin-E1 thioester and free AMP. Essential for the formation of radiation-induced foci, timely DNA repair and for response to replication stress. Promotes the recruitment of TP53BP1 and BRCA1 at DNA damage sites. The sequence is that of Ubiquitin-like modifier-activating enzyme 1 (UBA1) from Oryctolagus cuniculus (Rabbit).